Here is a 500-residue protein sequence, read N- to C-terminus: Cholesterol 24-hydroxylase (500 aa).

A helical transmembrane segment spans residues 3–23; sequence PGLLLLGSAVLLAFGLCCTFV. Residue cysteine 437 coordinates heme.

Belongs to the cytochrome P450 family. Requires heme as cofactor. In terms of tissue distribution, expressed in brain. The mRNA was broadly distributed with higher levels in gray matter zones and lower levels in regions rich in white matter. Not detected in fetal sample but its expression increases linearly with age.

It localises to the endoplasmic reticulum membrane. Its subcellular location is the microsome membrane. The protein localises to the postsynapse. It is found in the presynapse. The protein resides in the cell projection. It localises to the dendrite. It carries out the reaction cholesterol + reduced [NADPH--hemoprotein reductase] + O2 = (24S)-hydroxycholesterol + oxidized [NADPH--hemoprotein reductase] + H2O + H(+). The enzyme catalyses cholestanol + reduced [NADPH--hemoprotein reductase] + O2 = (24S)-hydroxycholestanol + oxidized [NADPH--hemoprotein reductase] + H2O + H(+). The catalysed reaction is 7-dehydrocholesterol + reduced [NADPH--hemoprotein reductase] + O2 = cholesta-5,7-dien-3beta,24S-diol + oxidized [NADPH--hemoprotein reductase] + H2O + H(+). It catalyses the reaction 7-dehydrocholesterol + reduced [NADPH--hemoprotein reductase] + O2 = cholesta-5,7-dien-3beta,25-diol + oxidized [NADPH--hemoprotein reductase] + H2O + H(+). It carries out the reaction desmosterol + reduced [NADPH--hemoprotein reductase] + O2 = (24Z),26-hydroxydesmosterol + oxidized [NADPH--hemoprotein reductase] + H2O + H(+). The enzyme catalyses desmosterol + reduced [NADPH--hemoprotein reductase] + O2 = (24S)-25-epoxycholesterol + oxidized [NADPH--hemoprotein reductase] + H2O + H(+). The catalysed reaction is 4beta-hydroxycholesterol + reduced [NADPH--hemoprotein reductase] + O2 = 4beta,24S-dihydroxycholesterol + oxidized [NADPH--hemoprotein reductase] + H2O + H(+). It catalyses the reaction (24S)-hydroxycholesterol + reduced [NADPH--hemoprotein reductase] + O2 = (24S,25R)-24,26-dihydroxycholesterol + oxidized [NADPH--hemoprotein reductase] + H2O + H(+). It carries out the reaction (24S)-hydroxycholesterol + reduced [NADPH--hemoprotein reductase] + O2 = 24S,25-dihydroxycholesterol + oxidized [NADPH--hemoprotein reductase] + H2O + H(+). The enzyme catalyses 7alpha-hydroxycholesterol + reduced [NADPH--hemoprotein reductase] + O2 = (24S)-7alpha-dihydroxycholesterol + oxidized [NADPH--hemoprotein reductase] + H2O + H(+). The catalysed reaction is progesterone + reduced [NADPH--hemoprotein reductase] + O2 = 17alpha-hydroxyprogesterone + oxidized [NADPH--hemoprotein reductase] + H2O + H(+). It catalyses the reaction testosterone + reduced [NADPH--hemoprotein reductase] + O2 = 16beta,17beta-dihydroxyandrost-4-en-3-one + oxidized [NADPH--hemoprotein reductase] + H2O + H(+). It carries out the reaction testosterone + reduced [NADPH--hemoprotein reductase] + O2 = 2-hydroxytestosterone + oxidized [NADPH--hemoprotein reductase] + H2O + H(+). The enzyme catalyses testosterone + reduced [NADPH--hemoprotein reductase] + O2 = 6beta,17beta-dihydroxyandrost-4-en-3-one + oxidized [NADPH--hemoprotein reductase] + H2O + H(+). Its pathway is steroid metabolism; cholesterol degradation. It functions in the pathway lipid metabolism; C21-steroid hormone metabolism. In terms of biological role, P450 monooxygenase that plays a major role in cholesterol homeostasis in the brain. Primarily catalyzes the hydroxylation (with S stereochemistry) at C-24 of cholesterol side chain, triggering cholesterol diffusion out of neurons and its further degradation. By promoting constant cholesterol elimination in neurons, may activate the mevalonate pathway and coordinate the synthesis of new cholesterol and nonsterol isoprenoids involved in synaptic activity and learning. Further hydroxylates cholesterol derivatives and hormone steroids on both the ring and side chain of these molecules, converting them into active oxysterols involved in lipid signaling and biosynthesis. Acts as an epoxidase converting cholesta-5,24-dien-3beta-ol/desmosterol into (24S),25-epoxycholesterol, an abundant lipid ligand of nuclear NR1H2 and NR1H3 receptors shown to promote neurogenesis in developing brain. May also catalyze the oxidative metabolism of xenobiotics, such as clotrimazole. The sequence is that of Cholesterol 24-hydroxylase from Homo sapiens (Human).